The sequence spans 209 residues: Thiamine-phosphate synthase (209 aa).

4-amino-2-methyl-5-(diphosphooxymethyl)pyrimidine is bound by residues 36–40 and asparagine 68; that span reads QYRDK. Residues aspartate 69 and aspartate 87 each contribute to the Mg(2+) site. A 4-amino-2-methyl-5-(diphosphooxymethyl)pyrimidine-binding site is contributed by threonine 106. Residue 133–135 participates in 2-[(2R,5Z)-2-carboxy-4-methylthiazol-5(2H)-ylidene]ethyl phosphate binding; sequence SST. 4-amino-2-methyl-5-(diphosphooxymethyl)pyrimidine is bound at residue lysine 136. 2-[(2R,5Z)-2-carboxy-4-methylthiazol-5(2H)-ylidene]ethyl phosphate is bound at residue glycine 163.

This sequence belongs to the thiamine-phosphate synthase family. It depends on Mg(2+) as a cofactor.

It catalyses the reaction 2-[(2R,5Z)-2-carboxy-4-methylthiazol-5(2H)-ylidene]ethyl phosphate + 4-amino-2-methyl-5-(diphosphooxymethyl)pyrimidine + 2 H(+) = thiamine phosphate + CO2 + diphosphate. The enzyme catalyses 2-(2-carboxy-4-methylthiazol-5-yl)ethyl phosphate + 4-amino-2-methyl-5-(diphosphooxymethyl)pyrimidine + 2 H(+) = thiamine phosphate + CO2 + diphosphate. It carries out the reaction 4-methyl-5-(2-phosphooxyethyl)-thiazole + 4-amino-2-methyl-5-(diphosphooxymethyl)pyrimidine + H(+) = thiamine phosphate + diphosphate. The protein operates within cofactor biosynthesis; thiamine diphosphate biosynthesis; thiamine phosphate from 4-amino-2-methyl-5-diphosphomethylpyrimidine and 4-methyl-5-(2-phosphoethyl)-thiazole: step 1/1. Condenses 4-methyl-5-(beta-hydroxyethyl)thiazole monophosphate (THZ-P) and 2-methyl-4-amino-5-hydroxymethyl pyrimidine pyrophosphate (HMP-PP) to form thiamine monophosphate (TMP). This chain is Thiamine-phosphate synthase, found in Pseudomonas paraeruginosa (strain DSM 24068 / PA7) (Pseudomonas aeruginosa (strain PA7)).